The chain runs to 333 residues: Chlorophyllide reductase 35.5 kDa chain (333 aa).

Over residues 1-17 the composition is skewed to basic and acidic residues; it reads MTDAPELKAFDQRLRDE. The disordered stretch occupies residues 1–30; it reads MTDAPELKAFDQRLRDEAAEEPTLEVPQGE. Residues 45 to 50 and lysine 74 each bind ATP; that span reads GIGKSF. Position 49 (serine 49) interacts with Mg(2+). Positions 130 and 165 each coordinate [4Fe-4S] cluster. Residue 219–220 coordinates ATP; it reads NK.

This sequence belongs to the NifH/BchL/ChlL family. In terms of assembly, homodimer. Chlorophyllide reductase is composed of three subunits; BchX, BchY and BchZ. The cofactor is [4Fe-4S] cluster.

It carries out the reaction 3-deacetyl-3-vinylbacteriochlorophyllide a + 2 oxidized [2Fe-2S]-[ferredoxin] + ADP + phosphate = chlorophyllide a + 2 reduced [2Fe-2S]-[ferredoxin] + ATP + H2O + H(+). The enzyme catalyses bacteriochlorophyllide a + 2 oxidized [2Fe-2S]-[ferredoxin] + ADP + phosphate = 3-acetyl-3-devinylchlorophyllide a + 2 reduced [2Fe-2S]-[ferredoxin] + ATP + H2O + H(+). It catalyses the reaction 3-deacetyl-3-(1-hydroxyethyl)bacteriochlorophyllide a + 2 oxidized [2Fe-2S]-[ferredoxin] + ADP + phosphate = 3-devinyl-3-(1-hydroxyethyl)chlorophyllide a + 2 reduced [2Fe-2S]-[ferredoxin] + ATP + H2O + H(+). Its pathway is porphyrin-containing compound metabolism; bacteriochlorophyll biosynthesis. Converts chlorophylls (Chl) into bacteriochlorophylls (BChl) by reducing ring B of the tetrapyrrole. This Cereibacter sphaeroides (strain ATCC 17023 / DSM 158 / JCM 6121 / CCUG 31486 / LMG 2827 / NBRC 12203 / NCIMB 8253 / ATH 2.4.1.) (Rhodobacter sphaeroides) protein is Chlorophyllide reductase 35.5 kDa chain (bchX).